The chain runs to 827 residues: Tuftelin-interacting protein 11 (827 aa).

Disordered regions lie at residues 31–129 and 179–203; these read FNPH…KGFV and QRKGKGAVGAYGSERTSQSLQDFPV. Over residues 41–60 the composition is skewed to basic and acidic residues; the sequence is TKEEATYGVWAERDSDEERP. The span at 88–98 shows a compositional bias: acidic residues; the sequence is DVSDEDSDEDE. Positions 99-112 are enriched in basic and acidic residues; it reads KPVKQEEIPKEFVP. The region spanning 145–191 is the G-patch domain; it reads TKGIGQKLLQKMGYVPGRGLGKNAQGIINPIEAKQRKGKGAVGAYGS.

This sequence belongs to the TFP11/STIP family. In terms of assembly, identified in the spliceosome C complex.

The protein resides in the nucleus. In terms of biological role, involved in pre-mRNA splicing, specifically in spliceosome disassembly during late-stage splicing events. The polypeptide is Tuftelin-interacting protein 11 (TFIP11) (Gallus gallus (Chicken)).